The following is a 172-amino-acid chain: Protein GrpE (172 aa).

The disordered stretch occupies residues 1-23 (MNQDHPECDSEELTQNSPETDPL).

Belongs to the GrpE family. In terms of assembly, homodimer.

The protein localises to the cytoplasm. Its function is as follows. Participates actively in the response to hyperosmotic and heat shock by preventing the aggregation of stress-denatured proteins, in association with DnaK and GrpE. It is the nucleotide exchange factor for DnaK and may function as a thermosensor. Unfolded proteins bind initially to DnaJ; upon interaction with the DnaJ-bound protein, DnaK hydrolyzes its bound ATP, resulting in the formation of a stable complex. GrpE releases ADP from DnaK; ATP binding to DnaK triggers the release of the substrate protein, thus completing the reaction cycle. Several rounds of ATP-dependent interactions between DnaJ, DnaK and GrpE are required for fully efficient folding. This Xylella fastidiosa (strain M23) protein is Protein GrpE.